The primary structure comprises 347 residues: Protein RecA (347 aa).

ATP is bound at residue 68–75 (GPESSGKT).

Belongs to the RecA family.

Its subcellular location is the cytoplasm. In terms of biological role, can catalyze the hydrolysis of ATP in the presence of single-stranded DNA, the ATP-dependent uptake of single-stranded DNA by duplex DNA, and the ATP-dependent hybridization of homologous single-stranded DNAs. It interacts with LexA causing its activation and leading to its autocatalytic cleavage. This Nocardia farcinica (strain IFM 10152) protein is Protein RecA.